The primary structure comprises 166 residues: Phospholipase A2 inhibitor clone 02/03/06/07 (166 aa).

An N-terminal signal peptide occupies residues 1 to 19; it reads MRLILLSGLLLLGTFLANG. One can recognise a C-type lectin domain in the interval 46-161; it reads LKHAFLTVHK…CDDNLLVVCE (116 aa). 2 disulfides stabilise this stretch: Cys83/Cys160 and Cys138/Cys152. Asn122 carries an N-linked (GlcNAc...) asparagine glycan.

The protein belongs to the alpha-type phospholipase A2 inhibitor family. In terms of assembly, homotrimer; non-covalently linked. Expressed by the liver.

The protein resides in the secreted. In terms of biological role, this phospholipase A2 inhibitor binds directly phospholipase A2 in the presence or absence of calcium. This is Phospholipase A2 inhibitor clone 02/03/06/07 from Lachesis muta muta (Bushmaster).